We begin with the raw amino-acid sequence, 414 residues long: Peptide chain release factor subunit 1 (414 aa).

This sequence belongs to the eukaryotic release factor 1 family. Heterodimer of two subunits, one of which binds GTP.

The protein resides in the cytoplasm. Its function is as follows. Directs the termination of nascent peptide synthesis (translation) in response to the termination codons UAA, UAG and UGA. In Pyrococcus abyssi (strain GE5 / Orsay), this protein is Peptide chain release factor subunit 1 (prf1).